Here is a 317-residue protein sequence, read N- to C-terminus: Porphobilinogen deaminase (317 aa).

C245 carries the post-translational modification S-(dipyrrolylmethanemethyl)cysteine.

This sequence belongs to the HMBS family. In terms of assembly, monomer. Requires dipyrromethane as cofactor.

The enzyme catalyses 4 porphobilinogen + H2O = hydroxymethylbilane + 4 NH4(+). The protein operates within porphyrin-containing compound metabolism; protoporphyrin-IX biosynthesis; coproporphyrinogen-III from 5-aminolevulinate: step 2/4. Its pathway is porphyrin-containing compound metabolism; chlorophyll biosynthesis. Functionally, tetrapolymerization of the monopyrrole PBG into the hydroxymethylbilane pre-uroporphyrinogen in several discrete steps. This Prochlorococcus marinus (strain MIT 9313) protein is Porphobilinogen deaminase.